Consider the following 128-residue polypeptide: Secreted RxLR effector protein 57 (128 aa).

The first 31 residues, 1–31, serve as a signal peptide directing secretion; the sequence is MHRKRLRVVLSATLLDLITCVQLMLDPLVRS. A RxLR motif is present at residues 58–61; that stretch reads RILR.

Belongs to the RxLR effector family.

It is found in the secreted. The protein localises to the host nucleus. It localises to the host cytoplasm. Its function is as follows. Secreted effector that completely suppresses the host cell death induced by cell death-inducing proteins. The sequence is that of Secreted RxLR effector protein 57 from Plasmopara viticola (Downy mildew of grapevine).